The sequence spans 201 residues: Cytochrome c oxidase subunit 3 (201 aa).

4 helical membrane-spanning segments follow: residues Val25–Ala45, Leu65–Gly85, Trp100–Leu120, and Val137–Ile157.

This sequence belongs to the cytochrome c oxidase subunit 3 family.

The protein localises to the cell membrane. The enzyme catalyses 4 Fe(II)-[cytochrome c] + O2 + 8 H(+)(in) = 4 Fe(III)-[cytochrome c] + 2 H2O + 4 H(+)(out). The chain is Cytochrome c oxidase subunit 3 (ctaE) from Thermostichus vulcanus (Synechococcus vulcanus).